Reading from the N-terminus, the 591-residue chain is Aspartate--tRNA(Asp/Asn) ligase (591 aa).

Glutamate 174 contacts L-aspartate. Residues 198 to 201 form an aspartate region; sequence QLFK. Residue arginine 220 participates in L-aspartate binding. Residues 220–222 and glutamine 229 contribute to the ATP site; that span reads RDE. Histidine 450 provides a ligand contact to L-aspartate. An ATP-binding site is contributed by glutamate 483. L-aspartate is bound at residue arginine 490. Residue 535 to 538 coordinates ATP; that stretch reads GLDR.

This sequence belongs to the class-II aminoacyl-tRNA synthetase family. Type 1 subfamily. As to quaternary structure, homodimer.

The protein resides in the cytoplasm. The catalysed reaction is tRNA(Asx) + L-aspartate + ATP = L-aspartyl-tRNA(Asx) + AMP + diphosphate. Its function is as follows. Aspartyl-tRNA synthetase with relaxed tRNA specificity since it is able to aspartylate not only its cognate tRNA(Asp) but also tRNA(Asn). Reaction proceeds in two steps: L-aspartate is first activated by ATP to form Asp-AMP and then transferred to the acceptor end of tRNA(Asp/Asn). The protein is Aspartate--tRNA(Asp/Asn) ligase of Ectopseudomonas mendocina (strain ymp) (Pseudomonas mendocina).